A 95-amino-acid polypeptide reads, in one-letter code: Acyl carrier protein (95 aa).

One can recognise a Carrier domain in the interval 4–79 (KEIFERIEQV…HVMELTLDLV (76 aa)). S39 bears the O-(pantetheine 4'-phosphoryl)serine mark.

The protein belongs to the acyl carrier protein (ACP) family. Post-translationally, 4'-phosphopantetheine is transferred from CoA to a specific serine of apo-ACP by AcpS. This modification is essential for activity because fatty acids are bound in thioester linkage to the sulfhydryl of the prosthetic group.

The protein resides in the cytoplasm. It functions in the pathway lipid metabolism; fatty acid biosynthesis. Its function is as follows. Carrier of the growing fatty acid chain in fatty acid biosynthesis. In Saccharopolyspora erythraea (strain ATCC 11635 / DSM 40517 / JCM 4748 / NBRC 13426 / NCIMB 8594 / NRRL 2338), this protein is Acyl carrier protein.